The sequence spans 1106 residues: Carbamoyl phosphate synthase large chain (1106 aa).

The tract at residues 1-402 (MPRREDIRSV…SFQKALRSLE (402 aa)) is carboxyphosphate synthetic domain. Residues Arg-129, Arg-169, Gly-175, Gly-176, Glu-208, Val-210, Glu-215, Gly-241, Val-242, His-243, Gln-285, and Glu-299 each coordinate ATP. The region spanning 133–328 (KKAMEKIGVR…IAKIAALLSI (196 aa)) is the ATP-grasp 1 domain. The Mg(2+) site is built by Gln-285, Glu-299, and Asn-301. 3 residues coordinate Mn(2+): Gln-285, Glu-299, and Asn-301. The segment at 403-582 (IDRYGFGSDG…YSSYDEEDES (180 aa)) is oligomerization domain. A carbamoyl phosphate synthetic domain region spans residues 583 to 964 (DVTNAKSVMI…AFLKSQYMAG (382 aa)). Residues 707–898 (VEVLEKLKLN…IVKYATRIMM (192 aa)) form the ATP-grasp 2 domain. ATP is bound by residues Arg-743, Ser-782, Leu-784, Glu-789, Gly-814, Ile-815, His-816, Ser-817, Gln-857, and Glu-869. Gln-857, Glu-869, and Asn-871 together coordinate Mg(2+). Residues Gln-857, Glu-869, and Asn-871 each contribute to the Mn(2+) site. Residues 965 to 1106 (DELPSQGTVF…QEIHAMPKIL (142 aa)) enclose the MGS-like domain. The tract at residues 965 to 1106 (DELPSQGTVF…QEIHAMPKIL (142 aa)) is allosteric domain.

The protein belongs to the CarB family. As to quaternary structure, composed of two chains; the small (or glutamine) chain promotes the hydrolysis of glutamine to ammonia, which is used by the large (or ammonia) chain to synthesize carbamoyl phosphate. Tetramer of heterodimers (alpha,beta)4. Requires Mg(2+) as cofactor. Mn(2+) is required as a cofactor.

It catalyses the reaction hydrogencarbonate + L-glutamine + 2 ATP + H2O = carbamoyl phosphate + L-glutamate + 2 ADP + phosphate + 2 H(+). The enzyme catalyses hydrogencarbonate + NH4(+) + 2 ATP = carbamoyl phosphate + 2 ADP + phosphate + 2 H(+). The protein operates within amino-acid biosynthesis; L-arginine biosynthesis; carbamoyl phosphate from bicarbonate: step 1/1. Its pathway is pyrimidine metabolism; UMP biosynthesis via de novo pathway; (S)-dihydroorotate from bicarbonate: step 1/3. Large subunit of the glutamine-dependent carbamoyl phosphate synthetase (CPSase). CPSase catalyzes the formation of carbamoyl phosphate from the ammonia moiety of glutamine, carbonate, and phosphate donated by ATP, constituting the first step of 2 biosynthetic pathways, one leading to arginine and/or urea and the other to pyrimidine nucleotides. The large subunit (synthetase) binds the substrates ammonia (free or transferred from glutamine from the small subunit), hydrogencarbonate and ATP and carries out an ATP-coupled ligase reaction, activating hydrogencarbonate by forming carboxy phosphate which reacts with ammonia to form carbamoyl phosphate. In Leptospira interrogans serogroup Icterohaemorrhagiae serovar copenhageni (strain Fiocruz L1-130), this protein is Carbamoyl phosphate synthase large chain.